Consider the following 426-residue polypeptide: Glutamate-1-semialdehyde 2,1-aminomutase (426 aa).

N6-(pyridoxal phosphate)lysine is present on Lys265.

It belongs to the class-III pyridoxal-phosphate-dependent aminotransferase family. HemL subfamily. As to quaternary structure, homodimer. The cofactor is pyridoxal 5'-phosphate.

It localises to the cytoplasm. It carries out the reaction (S)-4-amino-5-oxopentanoate = 5-aminolevulinate. The protein operates within porphyrin-containing compound metabolism; protoporphyrin-IX biosynthesis; 5-aminolevulinate from L-glutamyl-tRNA(Glu): step 2/2. In Hydrogenovibrio crunogenus (strain DSM 25203 / XCL-2) (Thiomicrospira crunogena), this protein is Glutamate-1-semialdehyde 2,1-aminomutase.